Consider the following 684-residue polypeptide: Collagen alpha-3(IX) chain (684 aa).

The N-terminal stretch at 1–25 (MAGPRACAPLLLLLLLGELLAAAGA) is a signal peptide. Disordered stretches follow at residues 26-521 (QRVG…KEAS) and 548-665 (LAPG…CDTS). The interval 29–519 (GLPGPPGPPG…TGKPGVPGKE (491 aa)) is triple-helical region 3 (COL3). Composition is skewed to pro residues over residues 31–42 (PGPPGPPGPPGK) and 55–64 (PGLPGPPGPK). The span at 66–82 (APGKPGKPGEAGLPGLP) shows a compositional bias: low complexity. Residues 130-139 (GPPGGIGLRG) show a composition bias toward gly residues. Composition is skewed to pro residues over residues 140-161 (PPGPSGLPGLPGPPGPPGPPGH) and 177-188 (ICPPGPPGPPGM). Over residues 200–212 (EQGEVGKDGEKGD) the composition is skewed to basic and acidic residues. The segment covering 221–237 (LPGSVGLQGPRGLRGLP) has biased composition (low complexity). 2 stretches are compositionally biased toward basic and acidic residues: residues 264–282 (AGDRGERGPEGFRGPKGDL) and 344–356 (SKGEKGERGRAGE). The short motif at 423–425 (RGD) is the Cell attachment site element. The N-linked (GlcNAc...) asparagine glycan is linked to Asn-483. Residues 498-507 (LGLQGVPGVP) show a composition bias toward low complexity. Positions 520-550 (ASEQRIRELCGGMISEQIAQLAAHLRKPLAP) are nonhelical region 3 (NC3). Positions 551–630 (GSIGRPGPAG…QGPQGVPGTS (80 aa)) are triple-helical region 2 (COL2). Positions 558 to 568 (PAGPPGPPGPP) are enriched in pro residues. Positions 570–586 (SIGHPGARGPPGYRGPT) are enriched in low complexity. A Cell attachment site motif is present at residues 601–603 (RGD). The span at 617–628 (DQGPQGPQGVPG) shows a compositional bias: low complexity. The nonhelical region 2 (NC2) stretch occupies residues 631 to 632 (KD). The triple-helical region 1 (COL1) stretch occupies residues 633–661 (GQDGAPGEPGPPGDPGLPGAIGAQGTPGI). Residues 662–684 (CDTSACQGAVLGGVGEKSGSRSS) are nonhelical region 1 (NC1).

The protein belongs to the fibril-associated collagens with interrupted helices (FACIT) family. In terms of assembly, heterotrimer of an alpha 1(IX), an alpha 2(IX) and an alpha 3(IX) chain. Post-translationally, covalently linked to the telopeptides of type II collagen by lysine-derived cross-links. Prolines at the third position of the tripeptide repeating unit (G-X-Y) are hydroxylated in some or all of the chains.

It is found in the secreted. The protein resides in the extracellular space. It localises to the extracellular matrix. In terms of biological role, structural component of hyaline cartilage and vitreous of the eye. This is Collagen alpha-3(IX) chain (COL9A3) from Homo sapiens (Human).